A 120-amino-acid chain; its full sequence is Large ribosomal subunit protein eL34x (120 aa).

The disordered stretch occupies residues 31-50 (TYQTTNKRASGPKCPVTGKR).

Belongs to the eukaryotic ribosomal protein eL34 family.

This Arabidopsis thaliana (Mouse-ear cress) protein is Large ribosomal subunit protein eL34x (RPL34C).